A 376-amino-acid chain; its full sequence is Succinyl-diaminopimelate desuccinylase (376 aa).

A Zn(2+)-binding site is contributed by His-74. Asp-76 is an active-site residue. A Zn(2+)-binding site is contributed by Asp-105. The active-site Proton acceptor is the Glu-135. Glu-136, Glu-164, and His-349 together coordinate Zn(2+).

This sequence belongs to the peptidase M20A family. DapE subfamily. In terms of assembly, homodimer. The cofactor is Zn(2+). Co(2+) serves as cofactor.

The enzyme catalyses N-succinyl-(2S,6S)-2,6-diaminopimelate + H2O = (2S,6S)-2,6-diaminopimelate + succinate. It functions in the pathway amino-acid biosynthesis; L-lysine biosynthesis via DAP pathway; LL-2,6-diaminopimelate from (S)-tetrahydrodipicolinate (succinylase route): step 3/3. Functionally, catalyzes the hydrolysis of N-succinyl-L,L-diaminopimelic acid (SDAP), forming succinate and LL-2,6-diaminopimelate (DAP), an intermediate involved in the bacterial biosynthesis of lysine and meso-diaminopimelic acid, an essential component of bacterial cell walls. This is Succinyl-diaminopimelate desuccinylase from Zymomonas mobilis subsp. mobilis (strain ATCC 31821 / ZM4 / CP4).